The following is a 2124-amino-acid chain: AMB antimetabolite synthetase AmbE (2124 aa).

An adenylation region spans residues leucine 456 to isoleucine 847. The methyltransferase stretch occupies residues aspartate 950 to valine 1147. In terms of domain architecture, Carrier 1 spans alanine 1251–alanine 1325. Serine 1286 carries the post-translational modification O-(pantetheine 4'-phosphoryl)serine. Residues aspartate 1359–proline 1780 are condensation. One can recognise a Carrier 2 domain in the interval alanine 1785–aspartate 1859. The residue at position 1819 (serine 1819) is an O-(pantetheine 4'-phosphoryl)serine. Residues arginine 1886–arginine 2107 form a thioesterase region.

It belongs to the NRP synthetase family. Requires pantetheine 4'-phosphate as cofactor.

It catalyses the reaction holo-[peptidyl-carrier protein] + L-glutamate + ATP = L-glutamyl-[peptidyl-carrier protein] + AMP + diphosphate. Its function is as follows. Involved in the biosynthesis of the antimetabolite L-2-amino-4-methoxy-trans-3-butenoic acid (AMB), a non-proteinogenic amino acid which is toxic for prokaryotes and eukaryotes. Adenylates L-glutamate and loads it onto its first peptidyl carrier domain via a thioester linkage to the phosphopanthetheine moiety. The second peptidyl carrier domain is loaded with a L-alanine activated by AmbB. After formation by AmbB of the L-Glu-L-Ala dipeptide at the first carrier domain of AmbE, the condensation domain of AmbE probably condenses this dipeptide with the L-Ala residue attached at the second carrier domain of AmbE to give the L-Ala-L-Glu-L-Ala tripeptide. The central amino acid, L-Glu, would then undergo a series of modifications to be converted into AMB while the two flanking L-Ala residues remain in place. Finally, the L-Ala-AMB-L-Ala tripeptide is probably released by thioester cleavage via the thioester domain of AmbE. The chain is AMB antimetabolite synthetase AmbE from Pseudomonas aeruginosa (strain ATCC 15692 / DSM 22644 / CIP 104116 / JCM 14847 / LMG 12228 / 1C / PRS 101 / PAO1).